Consider the following 203-residue polypeptide: ATP-dependent Clp protease proteolytic subunit (203 aa).

Catalysis depends on S107, which acts as the Nucleophile. H132 is an active-site residue.

The protein belongs to the peptidase S14 family. As to quaternary structure, fourteen ClpP subunits assemble into 2 heptameric rings which stack back to back to give a disk-like structure with a central cavity, resembling the structure of eukaryotic proteasomes.

It localises to the cytoplasm. It catalyses the reaction Hydrolysis of proteins to small peptides in the presence of ATP and magnesium. alpha-casein is the usual test substrate. In the absence of ATP, only oligopeptides shorter than five residues are hydrolyzed (such as succinyl-Leu-Tyr-|-NHMec, and Leu-Tyr-Leu-|-Tyr-Trp, in which cleavage of the -Tyr-|-Leu- and -Tyr-|-Trp bonds also occurs).. Functionally, cleaves peptides in various proteins in a process that requires ATP hydrolysis. Has a chymotrypsin-like activity. Plays a major role in the degradation of misfolded proteins. The sequence is that of ATP-dependent Clp protease proteolytic subunit from Shewanella woodyi (strain ATCC 51908 / MS32).